We begin with the raw amino-acid sequence, 481 residues long: Proline--tRNA ligase (481 aa).

It belongs to the class-II aminoacyl-tRNA synthetase family. ProS type 3 subfamily. In terms of assembly, homodimer.

The protein localises to the cytoplasm. The catalysed reaction is tRNA(Pro) + L-proline + ATP = L-prolyl-tRNA(Pro) + AMP + diphosphate. In terms of biological role, catalyzes the attachment of proline to tRNA(Pro) in a two-step reaction: proline is first activated by ATP to form Pro-AMP and then transferred to the acceptor end of tRNA(Pro). The protein is Proline--tRNA ligase of Saccharolobus islandicus (strain M.16.27) (Sulfolobus islandicus).